A 144-amino-acid polypeptide reads, in one-letter code: MAAPSGGVNCEEFAEFQELLKVMRTIDDRIVHELNTTVPTASFAGKIDASQTCKQLYESLMAAHASRDRVIKNCIAQTSAVVKNLREEREKNLDDLTLLKQLRKEQTKLKWMQSELNVEEVVNDRSWKVFNERCRIHFKPPKNE.

A2 is modified (N-acetylalanine). A coiled-coil region spans residues 82 to 120 (VKNLREEREKNLDDLTLLKQLRKEQTKLKWMQSELNVEE). Residue K100 is modified to N6-acetyllysine.

This sequence belongs to the MIX23 family.

In Homo sapiens (Human), this protein is Protein MIX23.